The sequence spans 351 residues: Phenylalanine--tRNA ligase alpha subunit (351 aa).

Residue Glu266 coordinates Mg(2+).

Belongs to the class-II aminoacyl-tRNA synthetase family. Phe-tRNA synthetase alpha subunit type 1 subfamily. In terms of assembly, tetramer of two alpha and two beta subunits. It depends on Mg(2+) as a cofactor.

The protein localises to the cytoplasm. The enzyme catalyses tRNA(Phe) + L-phenylalanine + ATP = L-phenylalanyl-tRNA(Phe) + AMP + diphosphate + H(+). The sequence is that of Phenylalanine--tRNA ligase alpha subunit from Anaplasma marginale (strain St. Maries).